Here is a 357-residue protein sequence, read N- to C-terminus: S-adenosyl-L-methionine:benzoic acid/salicylic acid carboxyl methyltransferase 3 (357 aa).

An S-adenosyl-L-homocysteine-binding site is contributed by tyrosine 18. Glutamine 25 contributes to the benzoate binding site. 6 residues coordinate S-adenosyl-L-homocysteine: cysteine 59, asparagine 64, aspartate 96, leucine 97, serine 135, and phenylalanine 136. Tryptophan 157 contributes to the benzoate binding site. Residues asparagine 168, aspartate 254, phenylalanine 256, and asparagine 257 each contribute to the Mg(2+) site. Glutamine 260 contacts benzoate.

It belongs to the methyltransferase superfamily. Type-7 methyltransferase family.

The enzyme catalyses benzoate + S-adenosyl-L-methionine = methyl benzoate + S-adenosyl-L-homocysteine. It functions in the pathway aromatic compound metabolism. Its function is as follows. Converts benzoic acid into the volatile ester methyl benzoates. This scent, mostly produced in a rhythmical, diurnal manner, attracts the pollinators. The polypeptide is S-adenosyl-L-methionine:benzoic acid/salicylic acid carboxyl methyltransferase 3 (Petunia hybrida (Petunia)).